The chain runs to 315 residues: Petrobactin import system permease protein YclO (315 aa).

9 consecutive transmembrane segments (helical) span residues 7 to 27 (IALLVGLAIVCIGLFLFYDLG), 40 to 60 (VAAIVLTGGAIAFSTMIFQTI), 76 to 96 (LYMLIQTGIIFLFGSANMVIM), 100 to 120 (INFIISVLLMILFSLVLYQIM), 128 to 148 (IFFLLLIGIVFGTLFSSLSSF), 172 to 192 (INTDLLWLAFIIFLLTGVYVW), 223 to 243 (LIVVAILVSVSTALVGPIMFL), 262 to 282 (YLIAGSVFISIIALVGGQFVV), and 288 to 308 (FSTTLSVIINFAGGIYFIYLL).

Belongs to the binding-protein-dependent transport system permease family. FecCD subfamily. As to quaternary structure, the complex is composed of two ATP-binding proteins (YclP), two transmembrane proteins (YclN and YclO) and a solute-binding protein (YclQ).

The protein localises to the cell membrane. Part of the ABC transporter complex YclNOPQ involved in uptake of ferric-petrobactin. Petrobactin is a photoreactive 3,4-catecholate siderophore produced by many members of the B.cereus group, including B.anthracis. Probably responsible for the translocation of the substrate across the membrane. This chain is Petrobactin import system permease protein YclO (yclO), found in Bacillus subtilis (strain 168).